The following is a 496-amino-acid chain: Cyclin-dependent kinase 16 (496 aa).

Residues 1-95 (MDRMKKIKRQ…SATSSDEVQS (95 aa)) are disordered. A Phosphoserine; by BRSK2 modification is found at S12. 7 positions are modified to phosphoserine: S36, S42, S64, S65, S78, S82, and S89. Basic and acidic residues predominate over residues 69–78 (IVHEDMKMGS). A compositionally biased stretch (polar residues) spans 83-93 (DQASATSSDEV). The residue at position 95 (S95) is a Phosphoserine; by CDK5. S110, S119, S138, S146, S153, and S155 each carry phosphoserine. The 282-residue stretch at 165–446 (YIKLDKLGEG…AEDARKHPFF (282 aa)) folds into the Protein kinase domain. Residues 171 to 179 (LGEGTYATV) and K194 each bind ATP. Position 175 is a phosphothreonine (T175). The active-site Proton acceptor is D286. T380 is subject to Phosphothreonine. A phosphoserine mark is found at S391, S478, and S480.

This sequence belongs to the protein kinase superfamily. CMGC Ser/Thr protein kinase family. CDC2/CDKX subfamily. In terms of assembly, found in a complex containing CABLES1, CDK17 and TDRD7. Interacts with BRSK2. Identified in a complex with NSF, syntaxin-1, synaptotagmin, SYN1, SYP and CDK5R1. Interacts with YWHAH, YWHAQ and YWHAZ. Interacts with CCNY; this interaction increases the CDK16 kinase activity. Interacts with CCNYL1; this interaction mutually increases the stability of CDK16 and CCNYL1 and increases the kinase activity of CDK16. Interacts with NSF. Post-translationally, phosphorylation of CDK16 is essential for the binding of CCNY, but also essential for the regulation of CDK16 kinase activity. Phosphorylation of CDK16 is essential for the binding of CCNYl1, but also essential for the regulation of CDK16 kinase activity. Ser-146 and Ser-153 are the critical sites for the binding of CCNYL1 and for modulating CDK16 kinase activity. Phosphorylation at Ser-153 inhibits kinase activity. As to expression, highly expressed in testis and brain, and detected at lower levels in heart, skeletal muscle, adipose tissue, lung, spleen and pancreas (at protein level). Ubiquitous with highest levels in testis and brain, with longer form predominant in all tissues except the testis.

It is found in the cytoplasm. The protein localises to the cytoplasmic vesicle. It localises to the secretory vesicle. Its subcellular location is the cell membrane. The protein resides in the synapse. It is found in the synaptosome. It catalyses the reaction L-seryl-[protein] + ATP = O-phospho-L-seryl-[protein] + ADP + H(+). The catalysed reaction is L-threonyl-[protein] + ATP = O-phospho-L-threonyl-[protein] + ADP + H(+). In terms of biological role, protein kinase that plays a role in vesicle-mediated transport processes and exocytosis. Can phosphorylate CCNY at 'Ser-336' (in vitro). Plays a role in the regulation of insulin secretion in response to changes in blood glucose levels. Regulates GH1 release by brain neurons. Phosphorylates NSF, and thereby regulates NSF oligomerization. Required for normal spermatogenesis. Regulates neuron differentiation and dendrite development. This is Cyclin-dependent kinase 16 (Cdk16) from Mus musculus (Mouse).